The sequence spans 272 residues: Phosphoglycolate phosphatase 1 (272 aa).

The Nucleophile role is filled by Asp19. Mg(2+) contacts are provided by Asp19, Asp21, and Asp182.

The protein belongs to the HAD-like hydrolase superfamily. CbbY/CbbZ/Gph/YieH family. It depends on Mg(2+) as a cofactor.

It carries out the reaction 2-phosphoglycolate + H2O = glycolate + phosphate. Its pathway is organic acid metabolism; glycolate biosynthesis; glycolate from 2-phosphoglycolate: step 1/1. In terms of biological role, specifically catalyzes the dephosphorylation of 2-phosphoglycolate. Is involved in the dissimilation of the intracellular 2-phosphoglycolate formed during the DNA repair of 3'-phosphoglycolate ends, a major class of DNA lesions induced by oxidative stress. This is Phosphoglycolate phosphatase 1 from Pseudomonas aeruginosa (strain ATCC 15692 / DSM 22644 / CIP 104116 / JCM 14847 / LMG 12228 / 1C / PRS 101 / PAO1).